Consider the following 879-residue polypeptide: Alanine--tRNA ligase (879 aa).

H566, H570, C668, and H672 together coordinate Zn(2+).

The protein belongs to the class-II aminoacyl-tRNA synthetase family. Zn(2+) is required as a cofactor.

Its subcellular location is the cytoplasm. It carries out the reaction tRNA(Ala) + L-alanine + ATP = L-alanyl-tRNA(Ala) + AMP + diphosphate. In terms of biological role, catalyzes the attachment of alanine to tRNA(Ala) in a two-step reaction: alanine is first activated by ATP to form Ala-AMP and then transferred to the acceptor end of tRNA(Ala). Also edits incorrectly charged Ser-tRNA(Ala) and Gly-tRNA(Ala) via its editing domain. The protein is Alanine--tRNA ligase of Clostridium perfringens (strain 13 / Type A).